The sequence spans 229 residues: Putative N-acetylmannosamine-6-phosphate 2-epimerase (229 aa).

It belongs to the NanE family.

It catalyses the reaction an N-acyl-D-glucosamine 6-phosphate = an N-acyl-D-mannosamine 6-phosphate. Its pathway is amino-sugar metabolism; N-acetylneuraminate degradation; D-fructose 6-phosphate from N-acetylneuraminate: step 3/5. Converts N-acetylmannosamine-6-phosphate (ManNAc-6-P) to N-acetylglucosamine-6-phosphate (GlcNAc-6-P). This chain is Putative N-acetylmannosamine-6-phosphate 2-epimerase, found in Shigella dysenteriae serotype 1 (strain Sd197).